A 29-amino-acid chain; its full sequence is L-serine dehydratase, beta chain (29 aa).

This sequence belongs to the iron-sulfur dependent L-serine dehydratase family. In terms of assembly, heterodimer of an alpha chain and a beta chain. Requires [4Fe-4S] cluster as cofactor.

The enzyme catalyses L-serine = pyruvate + NH4(+). It functions in the pathway carbohydrate biosynthesis; gluconeogenesis. This Anaerotignum propionicum (Clostridium propionicum) protein is L-serine dehydratase, beta chain.